The sequence spans 284 residues: Tropomyosin (284 aa).

Residues 1-273 (MEAIKKKMQA…KEKYKSISDE (273 aa)) adopt a coiled-coil conformation.

It belongs to the tropomyosin family. As to quaternary structure, homodimer. As to expression, ubiquitous, but especially prevalent in the anterior muscle bundles associated with legs. Expression in the mid and posterior regions is probably related to the numerous, small muscle bundles associated with the digestive and reproductive systems (at protein level).

Tropomyosin, in association with the troponin complex, plays a central role in the calcium dependent regulation of muscle contraction. This is Tropomyosin from Psoroptes ovis (Sheep scab mite).